The primary structure comprises 481 residues: GTPase Obg (481 aa).

The Obg domain maps to T2–V159. The OBG-type G domain maps to A160 to T330. Residues G166–S173, F191–V195, D212–G215, N282–D285, and S311–A313 each bind GTP. The Mg(2+) site is built by S173 and T193. The OCT domain maps to P348–P426. Basic and acidic residues predominate over residues G439 to A452. The interval G439 to E481 is disordered. A compositionally biased stretch (acidic residues) spans D468–E481.

It belongs to the TRAFAC class OBG-HflX-like GTPase superfamily. OBG GTPase family. Monomer. Mg(2+) serves as cofactor.

It is found in the cytoplasm. Its function is as follows. An essential GTPase which binds GTP, GDP and possibly (p)ppGpp with moderate affinity, with high nucleotide exchange rates and a fairly low GTP hydrolysis rate. Plays a role in control of the cell cycle, stress response, ribosome biogenesis and in those bacteria that undergo differentiation, in morphogenesis control. In Salinispora tropica (strain ATCC BAA-916 / DSM 44818 / JCM 13857 / NBRC 105044 / CNB-440), this protein is GTPase Obg.